Consider the following 63-residue polypeptide: Eumenitin VP1 (63 aa).

Residues 1 to 22 (MRGTSFILFAVVVILGFLHANA) form the signal peptide. AXPX repeat units follow at residues 22-25 (AEPL), 26-29 (ANPA), 32-35 (ANPD), 40-43 (ADPL), and 44-47 (ADPE). Residues 23–48 (EPLANPAPLANPDPLANADPLADPEA) constitute a propeptide that is removed on maturation.

Expressed by the venom gland.

It localises to the secreted. It is found in the target cell membrane. In terms of biological role, antimicrobial peptide with activities against the fungi B.cinerea (MIC=5 uM) and C.albicans (MIC=100 uM), the Gram-negative bacterium E.coli (MIC=25 uM) and the Gram-positive bacterium S.aureus (MIC=100 uM). Shows cytolytic activity against insect cell lines. Has no hemolytic activity against human erythrocytes. In vivo, peptide injection in the vicinity of the head and thorax of lepidopteran larvae induces feeding disorder followed by death due to starvation. The sequence is that of Eumenitin VP1 from Eumenes pomiformis (Potter wasp).